Consider the following 244-residue polypeptide: Sortase B (244 aa).

Topologically, residues 1 to 6 are cytoplasmic; it reads MRMKRF. Residues 7 to 24 traverse the membrane as a helical segment; the sequence is LTIVQILLVVIIIIFGYK. Residues 25 to 244 lie on the Extracellular side of the membrane; sequence IVQTYIEDKQ…VVVAKIIKVS (220 aa). Cysteine 223 acts as the Acyl-thioester intermediate in catalysis.

The protein belongs to the bacterial sortase family. Class B subfamily.

The protein localises to the cell membrane. The enzyme catalyses The enzyme catalyzes a cell wall sorting reaction in which a surface protein with a sorting signal containing a NPXTN motif is cleaved between the Thr and Asn residue. The resulting threonine carboxyl end of the protein is covalently attached to a pentaglycine cross-bridge of peptidoglycan.. Inhibited by MTSET (2-(Trimethylammonium)-ethyl-methanethiosulfonate) and E64 ([n- (l-3-trans-carboxyoxirane-2-carbonyl)-l-leucyl]-amido(4-guanido)butane). Inhibited by coptisine. Its function is as follows. Transpeptidase that anchors surface proteins to the cell wall. Recognizes and modifies its substrate by proteolytic cleavage of a C-terminal sorting signal. Following cleavage, a covalent intermediate is formed via a thioester bond between the sortase and its substrate, which is then transferred and covalently attached to the cell wall. This sortase recognizes an Asn-Pro-Gln-Thr-Asn (NPQTN) motif in IsdC, which is cleaved by the sortase between the threonine and aspargine residues; may only have 1 substrate in this bacterium. May be dedicated to the process of iron acquisition during bacterial infection. This chain is Sortase B, found in Staphylococcus aureus (strain NCTC 8325 / PS 47).